A 140-amino-acid polypeptide reads, in one-letter code: ATP synthase epsilon chain (140 aa).

The protein belongs to the ATPase epsilon chain family. F-type ATPases have 2 components, CF(1) - the catalytic core - and CF(0) - the membrane proton channel. CF(1) has five subunits: alpha(3), beta(3), gamma(1), delta(1), epsilon(1). CF(0) has three main subunits: a, b and c.

The protein localises to the cell inner membrane. Its function is as follows. Produces ATP from ADP in the presence of a proton gradient across the membrane. The sequence is that of ATP synthase epsilon chain from Nitrosococcus oceani (strain ATCC 19707 / BCRC 17464 / JCM 30415 / NCIMB 11848 / C-107).